The following is a 512-amino-acid chain: N-fatty-acyl-amino acid synthase/hydrolase PM20D1 (512 aa).

Positions 1 to 34 are cleaved as a signal peptide; that stretch reads MAVSRWKAVGSTLLAAFLVGLVVLIAVLLIRTYT. N-linked (GlcNAc...) asparagine glycosylation is found at N45 and N81. Residue H134 coordinates Zn(2+). The active site involves D136. D166 contributes to the Zn(2+) binding site. E200 (proton acceptor) is an active-site residue. Residues E201 and D227 each coordinate Zn(2+). N450 carries an N-linked (GlcNAc...) asparagine glycan. H472 serves as a coordination point for Zn(2+).

This sequence belongs to the peptidase M20A family.

It is found in the secreted. It catalyses the reaction an N-acyl-L-amino acid + H2O = an L-alpha-amino acid + a carboxylate. The catalysed reaction is an N-acyl-aromatic L-alpha-amino acid + H2O = an aromatic L-alpha-amino acid + a carboxylate. The enzyme catalyses N-(5Z,8Z,11Z,14Z)-eicosatetraenoyl-glycine + H2O = (5Z,8Z,11Z,14Z)-eicosatetraenoate + glycine. It carries out the reaction N-hexadecanoyl-L-phenylalanine + H2O = hexadecanoate + L-phenylalanine. It catalyses the reaction N-octadecanoyl-L-phenylalanine + H2O = octadecanoate + L-phenylalanine. The catalysed reaction is N-(4Z,7Z,10Z,13Z,16Z,19Z-docosahexaenoyl)-L-phenylalanine + H2O = (4Z,7Z,10Z,13Z,16Z,19Z)-docosahexaenoate + L-phenylalanine. The enzyme catalyses N-(9Z-octadecenoyl)-L-asparagine + H2O = L-asparagine + (9Z)-octadecenoate. It carries out the reaction (9Z)-octadecenoate + glycine = N-(9Z-octadecenoyl)glycine + H2O. It catalyses the reaction N-(9Z-octadecenoyl)-L-lysine + H2O = L-lysine + (9Z)-octadecenoate. The catalysed reaction is N-(9Z-octadecenoyl)-L-methionine + H2O = (9Z)-octadecenoate + L-methionine. The enzyme catalyses N-(9Z-octadecenoyl)-L-serine + H2O = L-serine + (9Z)-octadecenoate. It carries out the reaction N-(9Z-octadecenoyl)-L-tryptophan + H2O = L-tryptophan + (9Z)-octadecenoate. It catalyses the reaction N-(9Z-octadecenoyl)-L-tyrosine + H2O = L-tyrosine + (9Z)-octadecenoate. The catalysed reaction is N-(9Z-octadecenoyl)-L-glutamine + H2O = L-glutamine + (9Z)-octadecenoate. The enzyme catalyses N-(5Z,8Z,11Z,14Z-eicosatetraenoyl)-L-serine + H2O = (5Z,8Z,11Z,14Z)-eicosatetraenoate + L-serine. It carries out the reaction (5Z,8Z,11Z,14Z)-eicosatetraenoate + L-phenylalanine = N-(5Z,8Z,11Z,14Z-eicosatetraenoyl)-L-phenylalanine + H2O. It catalyses the reaction N-(9Z-octadecenoyl)-L-leucine + H2O = L-leucine + (9Z)-octadecenoate. The catalysed reaction is L-phenylalanine + (9Z)-octadecenoate = N-(9Z-octadecenoyl)-L-phenylalanine + H2O. It participates in amino-acid metabolism. The protein operates within energy metabolism; electron transfer. Its pathway is lipid metabolism; fatty acid metabolism. With respect to regulation, lipoproteins are powerful coactivators of PM20D1 activity in vitro and NAA biosynthesis in vivo. Functionally, secreted enzyme that regulates the endogenous N-fatty acyl amino acid (NAAs) tissue and circulating levels by functioning as a bidirectional NAA synthase/hydrolase. It condenses free fatty acids and free amino acids to generate NAAs and bidirectionally catalyzes the reverse hydrolysis reaction. Some of these NAAs stimulate oxidative metabolism via mitochondrial uncoupling, increasing energy expenditure in a UPC1-independent manner. Thereby, this secreted protein may indirectly regulate whole body energy expenditure. PM20D1 circulates in tight association with both low- and high-density (LDL and HDL,respectively) lipoprotein particles. The protein is N-fatty-acyl-amino acid synthase/hydrolase PM20D1 of Xenopus tropicalis (Western clawed frog).